Here is a 237-residue protein sequence, read N- to C-terminus: Uridylate kinase (237 aa).

Residue 12 to 15 (KLSG) coordinates ATP. The segment at 20 to 25 (GEDGLG) is involved in allosteric activation by GTP. Gly-54 serves as a coordination point for UMP. Positions 55 and 59 each coordinate ATP. UMP is bound by residues Asp-74 and 135–142 (TGNPFFTT). 3 residues coordinate ATP: Thr-162, Tyr-168, and Asp-171.

The protein belongs to the UMP kinase family. In terms of assembly, homohexamer.

The protein localises to the cytoplasm. It catalyses the reaction UMP + ATP = UDP + ADP. It functions in the pathway pyrimidine metabolism; CTP biosynthesis via de novo pathway; UDP from UMP (UMPK route): step 1/1. With respect to regulation, allosterically activated by GTP. Inhibited by UTP. Catalyzes the reversible phosphorylation of UMP to UDP. In Haemophilus influenzae (strain ATCC 51907 / DSM 11121 / KW20 / Rd), this protein is Uridylate kinase (pyrH).